We begin with the raw amino-acid sequence, 176 residues long: NAD(P)H-quinone oxidoreductase subunit 6, chloroplastic (176 aa).

5 helical membrane-spanning segments follow: residues 10-30, 33-53, 60-80, 95-115, and 152-172; these read ILVL…VLLT, IYSA…YFLL, VAQL…AVMF, IGDG…MTTI, and FYLP…GAIT.

The protein belongs to the complex I subunit 6 family. In terms of assembly, NDH is composed of at least 16 different subunits, 5 of which are encoded in the nucleus.

The protein localises to the plastid. Its subcellular location is the chloroplast thylakoid membrane. It catalyses the reaction a plastoquinone + NADH + (n+1) H(+)(in) = a plastoquinol + NAD(+) + n H(+)(out). The catalysed reaction is a plastoquinone + NADPH + (n+1) H(+)(in) = a plastoquinol + NADP(+) + n H(+)(out). Functionally, NDH shuttles electrons from NAD(P)H:plastoquinone, via FMN and iron-sulfur (Fe-S) centers, to quinones in the photosynthetic chain and possibly in a chloroplast respiratory chain. The immediate electron acceptor for the enzyme in this species is believed to be plastoquinone. Couples the redox reaction to proton translocation, and thus conserves the redox energy in a proton gradient. In Saccharum hybrid (Sugarcane), this protein is NAD(P)H-quinone oxidoreductase subunit 6, chloroplastic (ndhG).